An 833-amino-acid chain; its full sequence is Leucine--tRNA ligase (833 aa).

The 'HIGH' region signature appears at 41-52; sequence PYPSGAGLHVGH. Positions 610–614 match the 'KMSKS' region motif; the sequence is KMSKS. Lys613 provides a ligand contact to ATP.

Belongs to the class-I aminoacyl-tRNA synthetase family.

It localises to the cytoplasm. It catalyses the reaction tRNA(Leu) + L-leucine + ATP = L-leucyl-tRNA(Leu) + AMP + diphosphate. This chain is Leucine--tRNA ligase, found in Streptococcus agalactiae serotype III (strain NEM316).